A 456-amino-acid chain; its full sequence is tRNA modification GTPase MnmE (456 aa).

3 residues coordinate (6S)-5-formyl-5,6,7,8-tetrahydrofolate: R24, E81, and K120. The TrmE-type G domain maps to 216–379; it reads GMTVVIAGRP…LREHLKACMG (164 aa). Position 226 (N226) interacts with K(+). GTP is bound by residues 226-231, 245-251, 270-273, 335-338, and 359-361; these read NAGKSS, TEIAGTT, DTAG, NKAD, and SAR. S230 provides a ligand contact to Mg(2+). 3 residues coordinate K(+): T245, I247, and T250. Mg(2+) is bound at residue T251. Residue K456 coordinates (6S)-5-formyl-5,6,7,8-tetrahydrofolate.

This sequence belongs to the TRAFAC class TrmE-Era-EngA-EngB-Septin-like GTPase superfamily. TrmE GTPase family. As to quaternary structure, homodimer. Heterotetramer of two MnmE and two MnmG subunits. Requires K(+) as cofactor.

Its subcellular location is the cytoplasm. In terms of biological role, exhibits a very high intrinsic GTPase hydrolysis rate. Involved in the addition of a carboxymethylaminomethyl (cmnm) group at the wobble position (U34) of certain tRNAs, forming tRNA-cmnm(5)s(2)U34. The chain is tRNA modification GTPase MnmE from Pseudomonas savastanoi pv. phaseolicola (strain 1448A / Race 6) (Pseudomonas syringae pv. phaseolicola (strain 1448A / Race 6)).